The chain runs to 394 residues: Phosphoglycerate kinase (394 aa).

Substrate-binding positions include 21–23 (DFN), R36, 59–62 (HLGR), R118, and R151. S183 is modified (phosphoserine). Positions 201 and 292 each coordinate ATP. Phosphothreonine is present on T299. ATP is bound by residues E323 and 350 to 353 (GGDS).

The protein belongs to the phosphoglycerate kinase family. Monomer.

The protein localises to the cytoplasm. It catalyses the reaction (2R)-3-phosphoglycerate + ATP = (2R)-3-phospho-glyceroyl phosphate + ADP. Its pathway is carbohydrate degradation; glycolysis; pyruvate from D-glyceraldehyde 3-phosphate: step 2/5. This is Phosphoglycerate kinase from Anoxybacillus flavithermus (strain DSM 21510 / WK1).